A 466-amino-acid chain; its full sequence is Argininosuccinate lyase (466 aa).

The protein belongs to the lyase 1 family. Argininosuccinate lyase subfamily.

It localises to the cytoplasm. It carries out the reaction 2-(N(omega)-L-arginino)succinate = fumarate + L-arginine. It participates in amino-acid biosynthesis; L-arginine biosynthesis; L-arginine from L-ornithine and carbamoyl phosphate: step 3/3. The sequence is that of Argininosuccinate lyase from Methylocella silvestris (strain DSM 15510 / CIP 108128 / LMG 27833 / NCIMB 13906 / BL2).